A 162-amino-acid polypeptide reads, in one-letter code: NADH-quinone oxidoreductase subunit I (162 aa).

2 4Fe-4S ferredoxin-type domains span residues 52–82 (LRRY…IEAG) and 93–122 (TRYD…EGPN). 8 residues coordinate [4Fe-4S] cluster: Cys62, Cys65, Cys68, Cys72, Cys102, Cys105, Cys108, and Cys112.

It belongs to the complex I 23 kDa subunit family. In terms of assembly, NDH-1 is composed of 14 different subunits. Subunits NuoA, H, J, K, L, M, N constitute the membrane sector of the complex. Requires [4Fe-4S] cluster as cofactor.

The protein resides in the cell inner membrane. The enzyme catalyses a quinone + NADH + 5 H(+)(in) = a quinol + NAD(+) + 4 H(+)(out). In terms of biological role, NDH-1 shuttles electrons from NADH, via FMN and iron-sulfur (Fe-S) centers, to quinones in the respiratory chain. The immediate electron acceptor for the enzyme in this species is believed to be ubiquinone. Couples the redox reaction to proton translocation (for every two electrons transferred, four hydrogen ions are translocated across the cytoplasmic membrane), and thus conserves the redox energy in a proton gradient. In Methylocella silvestris (strain DSM 15510 / CIP 108128 / LMG 27833 / NCIMB 13906 / BL2), this protein is NADH-quinone oxidoreductase subunit I.